Here is a 114-residue protein sequence, read N- to C-terminus: Ig heavy chain V-A2 region BS-1 (114 aa).

Gln1 is subject to Pyrrolidone carboxylic acid. The Ig-like domain occupies 1-107; that stretch reads QSVKESEGGL…YLGLMDVWGP (107 aa).

This chain is Ig heavy chain V-A2 region BS-1, found in Oryctolagus cuniculus (Rabbit).